The chain runs to 240 residues: MTESQETPITEDGEARPHRRIKSFVMRAGRMTEGQQRGLEQGGPLFILPLADSPVDYDQVFGRSAPRTLEIGFGMGHSLLEMAAAAPELDFIGVEVHRPGVGALLNGVLTQGLKNLRVYDCDAIEVLNRCVADNSLDRLMLFFPDPWHKARHHKRRIVQPEFAELVRRKLKVGGVFHMATDWEPYAEHMLEVMKVAPGYRNQAADGAYVPRPEERPITKFERRGERLGHGVWDLKFEKVD.

S-adenosyl-L-methionine contacts are provided by glutamate 70, glutamate 95, aspartate 122, and aspartate 145. Residue aspartate 145 is part of the active site. Residues lysine 149, aspartate 181, and 218–221 contribute to the substrate site; that span reads TKFE.

The protein belongs to the class I-like SAM-binding methyltransferase superfamily. TrmB family.

It catalyses the reaction guanosine(46) in tRNA + S-adenosyl-L-methionine = N(7)-methylguanosine(46) in tRNA + S-adenosyl-L-homocysteine. It functions in the pathway tRNA modification; N(7)-methylguanine-tRNA biosynthesis. In terms of biological role, catalyzes the formation of N(7)-methylguanine at position 46 (m7G46) in tRNA. The polypeptide is tRNA (guanine-N(7)-)-methyltransferase (Pseudomonas entomophila (strain L48)).